Reading from the N-terminus, the 299-residue chain is uncharacterized protein (299 aa).

The tract at residues 1-38 (MSLDSNSDTEFELVPKFQTQPTRGDAPKSPELEEVSTV) is disordered.

Belongs to the calycin superfamily. Fatty-acid binding protein (FABP) family.

This is an uncharacterized protein from Caenorhabditis elegans.